The chain runs to 207 residues: Holliday junction branch migration complex subunit RuvA (207 aa).

The interval 1–64 is domain I; the sequence is MIGLINGQVQ…EDAQLLYGFI (64 aa). Positions 65–143 are domain II; it reads DRKERDVFRQ…NIEVDSSHLE (79 aa). The tract at residues 144–152 is flexible linker; the sequence is FAMQPAPIS. The tract at residues 153–207 is domain III; the sequence is AEGSIIAEVEGALISLGYKEREAQQAIKAAKSNGETFADTQSLLKATLQQFQSFK.

This sequence belongs to the RuvA family. In terms of assembly, homotetramer. Forms an RuvA(8)-RuvB(12)-Holliday junction (HJ) complex. HJ DNA is sandwiched between 2 RuvA tetramers; dsDNA enters through RuvA and exits via RuvB. An RuvB hexamer assembles on each DNA strand where it exits the tetramer. Each RuvB hexamer is contacted by two RuvA subunits (via domain III) on 2 adjacent RuvB subunits; this complex drives branch migration. In the full resolvosome a probable DNA-RuvA(4)-RuvB(12)-RuvC(2) complex forms which resolves the HJ.

Its subcellular location is the cytoplasm. Functionally, the RuvA-RuvB-RuvC complex processes Holliday junction (HJ) DNA during genetic recombination and DNA repair, while the RuvA-RuvB complex plays an important role in the rescue of blocked DNA replication forks via replication fork reversal (RFR). RuvA specifically binds to HJ cruciform DNA, conferring on it an open structure. The RuvB hexamer acts as an ATP-dependent pump, pulling dsDNA into and through the RuvAB complex. HJ branch migration allows RuvC to scan DNA until it finds its consensus sequence, where it cleaves and resolves the cruciform DNA. The sequence is that of Holliday junction branch migration complex subunit RuvA from Psychrobacter cryohalolentis (strain ATCC BAA-1226 / DSM 17306 / VKM B-2378 / K5).